Here is a 33-residue protein sequence, read N- to C-terminus: MSDIN-like toxin proprotein 1 (33 aa).

Residues 1-10 (MSDINATRLP) constitute a propeptide that is removed on maturation. Residues 11–18 (IIWAPVVP) constitute a cross-link (cyclopeptide (Ile-Pro)). Residues 19-33 (CISDDNDSTLTRGQR) constitute a propeptide that is removed on maturation.

Belongs to the MSDIN fungal toxin family. In terms of processing, processed by the macrocyclase-peptidase enzyme POPB to yield a toxic cyclic octapeptide. POPB first removes 10 residues from the N-terminus. Conformational trapping of the remaining peptide forces the enzyme to release this intermediate rather than proceed to macrocyclization. The enzyme rebinds the remaining peptide in a different conformation and catalyzes macrocyclization of the N-terminal 8 residues.

In terms of biological role, probable toxin that belongs to the MSDIN-like toxin family responsible for a large number of food poisoning cases and deaths. This Amanita fuliginea (East Asian brown death cap) protein is MSDIN-like toxin proprotein 1.